Here is a 252-residue protein sequence, read N- to C-terminus: tRNA pseudouridine synthase A (252 aa).

Asp52 functions as the Nucleophile in the catalytic mechanism. Tyr110 is a substrate binding site.

Belongs to the tRNA pseudouridine synthase TruA family. Homodimer.

The catalysed reaction is uridine(38/39/40) in tRNA = pseudouridine(38/39/40) in tRNA. Formation of pseudouridine at positions 38, 39 and 40 in the anticodon stem and loop of transfer RNAs. This Blochmanniella floridana protein is tRNA pseudouridine synthase A.